Reading from the N-terminus, the 87-residue chain is MERKWALLLFLGMVTLVSCGLREKHVQKLVALIPNDTVRSILKAVVHKAAKTQFGCPAYEGYCNNHCQDIKRKDGECHGFKCKCAKD.

A signal peptide spans 1-19; sequence MERKWALLLFLGMVTLVSC. A propeptide spanning residues 20–27 is cleaved from the precursor; the sequence is GLREKHVQ. In terms of domain architecture, BetaSPN-type CS-alpha/beta spans 53–87; that stretch reads QFGCPAYEGYCNNHCQDIKRKDGECHGFKCKCAKD. Cystine bridges form between cysteine 56/cysteine 77, cysteine 63/cysteine 82, and cysteine 67/cysteine 84.

It belongs to the long chain scorpion toxin family. Class 1 subfamily. As to expression, expressed by the venom gland.

It localises to the secreted. Functionally, inhibits voltage-gated potassium channel. In Tityus trivittatus (Argentinean scorpion), this protein is Potassium channel toxin Ttr-beta-KTx.